The following is a 345-amino-acid chain: ATP-dependent (S)-NAD(P)H-hydrate dehydratase (345 aa).

The 324-residue stretch at 9–332 (ILSLARSMIP…DMVGEVYEEV (324 aa)) folds into the YjeF C-terminal domain. (6S)-NADPHX-binding positions include glycine 113 and 170-176 (NVMEFKR). Residues 208-212 (KGPSD) and 241-250 (GGLKRVGGQG) contribute to the ATP site. Aspartate 251 is a (6S)-NADPHX binding site.

The protein belongs to the NnrD/CARKD family. The cofactor is Mg(2+).

It localises to the cytoplasm. The enzyme catalyses (6S)-NADHX + ATP = ADP + phosphate + NADH + H(+). The catalysed reaction is (6S)-NADPHX + ATP = ADP + phosphate + NADPH + H(+). Its function is as follows. Catalyzes the dehydration of the S-form of NAD(P)HX at the expense of ATP, which is converted to ADP. Together with NAD(P)HX epimerase, which catalyzes the epimerization of the S- and R-forms, the enzyme allows the repair of both epimers of NAD(P)HX, a damaged form of NAD(P)H that is a result of enzymatic or heat-dependent hydration. The sequence is that of ATP-dependent (S)-NAD(P)H-hydrate dehydratase from Cryptococcus neoformans var. neoformans serotype D (strain JEC21 / ATCC MYA-565) (Filobasidiella neoformans).